We begin with the raw amino-acid sequence, 446 residues long: Keratin, type I cytoskeletal 25 (446 aa).

The segment at 1–20 is disordered; sequence MSLRLSSGSKRSYARPSTGS. A head region spans residues 1-74; the sequence is MSLRLSSGSK…VNEGGLLSGN (74 aa). Residues 75–110 form a coil 1A region; sequence EKVTMQNLNDRLASYLDNVQALQEANADLEQKIKGW. The region spanning 75-390 is the IF rod domain; the sequence is EKVTMQNLND…LLIGGDEGAC (316 aa). The segment at 111 to 132 is linker 1; the sequence is YEKFGPGSCRGLDHDYSRYFPI. The interval 133 to 224 is coil 1B; it reads IDDLKNQIIT…KNHKEEMQAL (92 aa). Positions 225 to 247 are linker 12; the sequence is QCAAGGNVNVEMNAAPGVDLTVL. Positions 248-386 are coil 2; the sequence is LNNMRAEYEA…ETYCLLIGGD (139 aa). Residues 387–446 are tail; that stretch reads EGACKSSSYKSKDYTSGNAGNQSKDSPKAIVVKKVLEEVDQRSKILTTRLHSLEEKSQSN. The segment at 394-413 is disordered; the sequence is SYKSKDYTSGNAGNQSKDSP. Positions 400 to 410 are enriched in polar residues; that stretch reads YTSGNAGNQSK. A Phosphoserine modification is found at Ser438.

Belongs to the intermediate filament family. In terms of assembly, heterodimer of a type I and a type II keratin. Heterodimer with type II keratin KRT5 leading to the formation of keratin intermediate filament (KIF) network. Interacts with KRT6A to form filaments.

The protein resides in the cytoplasm. Essential for the proper assembly of type I and type II keratin protein complexes and formation of keratin intermediate filaments in the inner root sheath (irs). Plays a role in the cytoskeleton organization. This chain is Keratin, type I cytoskeletal 25, found in Rattus norvegicus (Rat).